The primary structure comprises 692 residues: Elongation factor G (692 aa).

The region spanning 8 to 282 (ENTRNIGIMA…AVIDYLPSPL (275 aa)) is the tr-type G domain. GTP-binding positions include 17 to 24 (AHIDAGKT), 81 to 85 (DTPGH), and 135 to 138 (NKMD).

The protein belongs to the TRAFAC class translation factor GTPase superfamily. Classic translation factor GTPase family. EF-G/EF-2 subfamily.

It is found in the cytoplasm. In terms of biological role, catalyzes the GTP-dependent ribosomal translocation step during translation elongation. During this step, the ribosome changes from the pre-translocational (PRE) to the post-translocational (POST) state as the newly formed A-site-bound peptidyl-tRNA and P-site-bound deacylated tRNA move to the P and E sites, respectively. Catalyzes the coordinated movement of the two tRNA molecules, the mRNA and conformational changes in the ribosome. This chain is Elongation factor G, found in Bacillus cereus (strain Q1).